The following is a 968-amino-acid chain: MDSTLTASEIRQRFIDFFKRNEHTYVHSSATIPLDDPTLLFANAGMNQFKPIFLNTIDPSHPMAKLSRAANTQKCIRAGGKHNDLDDVGKDVYHHTFFEMLGSWSFGDYFKELACKMALELLTQEFGIPIERLYVTYFGGDEAAGLEADLECKQIWQNLGLDDTKILPGNMKDNFWEMGDTGPCGPCSEIHYDRIGGRDAAHLVNQDDPNVLEIWNLVFIQYNREADGILKPLPKKSIDTGMGLERLVSVLQNKMSNYDTDLFVPYFEAIQKGTGARPYTGKVGAEDADGIDMAYRVLADHARTITVALADGGRPDNTGRGYVLRRILRRAVRYAHEKLNASRGFFATLVDVVVQSLGDAFPELKKDPDMVKDIINEEEVQFLKTLSRGRRILDRKIQSLGDSKTIPGDTAWLLYDTYGFPVDLTGLIAEEKGLVVDMDGFEEERKLAQLKSQGKGAGGEDLIMLDIYAIEELRARGLEVTDDSPKYNYHLDSSGSYVFENTVATVMALRREKMFVEEVSTGQECGVVLDKTCFYAEQGGQIYDEGYLVKVDDSSEDKTEFTVKNAQVRGGYVLHIGTIYGDLKVGDQVWLFIDEPRRRPIMSNHTATHILNFALRSVLGEADQKGSLVAPDRLRFDFTAKGAMSTQQIKKAEEIANEMIEAAKAVYTQDCPLAAAKAIQGLRAVFDETYPDPVRVVSIGVPVSELLDDPSGPAGSLTSVEFCGGTHLRNSSHAGAFVIVTEEAIAKGIRRIVAVTGAEAQKALRKAESLKKCLSVMEAKVKAQTAPNKDVQREIADLGEALATAVIPQWQKDELRETLKSLKKVMDDLDRASKADVQKRVLEKTKQFIDSNPNQPLVILEMESGASAKALNEALKLFKMHSPQTSAMLFTVDNEAGKITCLCQVPQNAANRGLKASEWVQQVSGLMDGKGGGKDVSAQATGKNVGCLQEALQLATSFAQLRLGDVKN.

An N-acetylmethionine modification is found at Met-1. Ser-3 and Ser-8 each carry phosphoserine. Position 19 is an N6-acetyllysine (Lys-19). Residues Arg-77, His-95, Trp-176, and 214–216 (IWN) each bind ATP. Asn-216 and Asp-239 together coordinate L-alanine. Gly-243 contacts ATP. Residues Ser-399 and Ser-555 each carry the phosphoserine modification. Zn(2+) is bound by residues His-605, His-609, Cys-723, and His-727. Positions 750–763 (RRIVAVTGAEAQKA) match the Nuclear localization signal motif. Lys-876 carries the post-translational modification N6-acetyllysine. Position 943 is an N6,N6,N6-trimethyllysine; alternate (Lys-943). Lys-943 is subject to N6,N6-dimethyllysine; alternate. Lys-943 is modified (N6-methyllysine; alternate).

It belongs to the class-II aminoacyl-tRNA synthetase family. As to quaternary structure, monomer. Interacts with ANKRD16; the interaction is direct. The cofactor is Zn(2+). In terms of processing, ISGylated. Methylation at 'Lys-943' by METTL21C.

The protein resides in the cytoplasm. It localises to the nucleus. The catalysed reaction is tRNA(Ala) + L-alanine + ATP = L-alanyl-tRNA(Ala) + AMP + diphosphate. The enzyme catalyses (S)-lactate + ATP + H(+) = (S)-lactoyl-AMP + diphosphate. It catalyses the reaction (S)-lactoyl-AMP + L-lysyl-[protein] = N(6)-[(S)-lactoyl]-L-lysyl-[protein] + AMP + 2 H(+). With respect to regulation, the protein lactyltransferase activity is inhibited by beta-alanine. Its function is as follows. Catalyzes the attachment of alanine to tRNA(Ala) in a two-step reaction: alanine is first activated by ATP to form Ala-AMP and then transferred to the acceptor end of tRNA(Ala). Also edits incorrectly charged tRNA(Ala) via its editing domain. In presence of high levels of lactate, also acts as a protein lactyltransferase that mediates lactylation of lysine residues in target proteins, such as TEAD1, TP53/p53 and YAP1. Protein lactylation takes place in a two-step reaction: lactate is first activated by ATP to form lactate-AMP and then transferred to lysine residues of target proteins. Acts as an inhibitor of TP53/p53 activity by catalyzing lactylation of TP53/p53. Acts as a positive regulator of the Hippo pathway by mediating lactylation of TEAD1 and YAP1. The polypeptide is Alanine--tRNA ligase, cytoplasmic (Homo sapiens (Human)).